The sequence spans 317 residues: tRNA(Ile)-lysidine synthase (317 aa).

32–37 (SGGVDS) lines the ATP pocket.

The protein belongs to the tRNA(Ile)-lysidine synthase family.

Its subcellular location is the cytoplasm. It catalyses the reaction cytidine(34) in tRNA(Ile2) + L-lysine + ATP = lysidine(34) in tRNA(Ile2) + AMP + diphosphate + H(+). In terms of biological role, ligates lysine onto the cytidine present at position 34 of the AUA codon-specific tRNA(Ile) that contains the anticodon CAU, in an ATP-dependent manner. Cytidine is converted to lysidine, thus changing the amino acid specificity of the tRNA from methionine to isoleucine. This Aquifex aeolicus (strain VF5) protein is tRNA(Ile)-lysidine synthase.